Consider the following 510-residue polypeptide: Archaeosine synthase subunit alpha (510 aa).

A PUA domain is found at 427 to 510 (LGKFTINKAS…LKKGIAVKVR (84 aa)).

This sequence belongs to the archaeosine synthase type 1 family. In terms of assembly, forms a robust complex with the archaeosine synthase beta subunit RaSEA, likely an alpha(2)beta(2) heterotetrameric structure. Formation of this complex highly increases lysine transfer activity.

The catalysed reaction is 7-cyano-7-carbaguanosine(15) in tRNA + L-lysine = 7-N-[(5S)-5-amino-5-carboxypentyl]formamidino-7-deazaguanosine(15) in tRNA. The protein operates within tRNA modification; archaeosine-tRNA biosynthesis. Its function is as follows. Functions in the biosynthesis of archaeosine, a modified nucleoside present in the dihydrouridine loop (D-loop) of archaeal tRNAs. Catalyzes the addition of L-lysine to the cyano group of 7-cyano-7-deazaguanine (preQ0)-modified tRNAs at position 15, to generate q0kN15-tRNA, a q0N lysine adduct identified as 7-N-[(5S)-5-amino-5-carboxypentyl]formamidino-7-deazaguanosine. The polypeptide is Archaeosine synthase subunit alpha (Thermoplasma acidophilum (strain ATCC 25905 / DSM 1728 / JCM 9062 / NBRC 15155 / AMRC-C165)).